Here is a 1486-residue protein sequence, read N- to C-terminus: Glutamate synthase [NADPH] large chain (1486 aa).

Residues 1–11 constitute a propeptide that is removed on maturation; sequence MLYDKSLERDN. The Nucleophile role is filled by Cys12. The 391-residue stretch at 12–402 folds into the Glutamine amidotransferase type-2 domain; the sequence is CGFGLIAHIE…PGELMVIDTR (391 aa). 1049 to 1101 contacts FMN; sequence LVETQQALVANGLRHKIRLQVDGGLKTGVDIIKAAILGAESFGFGTGPMVALG. [3Fe-4S] cluster is bound by residues Cys1102, Cys1108, and Cys1113.

This sequence belongs to the glutamate synthase family. In terms of assembly, aggregate of 4 catalytic active heterodimers, consisting of a large and a small subunit. [3Fe-4S] cluster serves as cofactor. The cofactor is FAD. Requires FMN as cofactor.

The catalysed reaction is 2 L-glutamate + NADP(+) = L-glutamine + 2-oxoglutarate + NADPH + H(+). It participates in amino-acid biosynthesis; L-glutamate biosynthesis via GLT pathway; L-glutamate from 2-oxoglutarate and L-glutamine (NADP(+) route): step 1/1. Its pathway is energy metabolism; nitrogen metabolism. Functionally, catalyzes the conversion of L-glutamine and 2-oxoglutarate into two molecules of L-glutamate. This chain is Glutamate synthase [NADPH] large chain (gltB), found in Escherichia coli (strain K12).